We begin with the raw amino-acid sequence, 449 residues long: Phosphoglucosamine mutase (449 aa).

The active-site Phosphoserine intermediate is S101. Residues S101, D241, D243, and D245 each contribute to the Mg(2+) site. S101 carries the post-translational modification Phosphoserine.

The protein belongs to the phosphohexose mutase family. Requires Mg(2+) as cofactor. Activated by phosphorylation.

It catalyses the reaction alpha-D-glucosamine 1-phosphate = D-glucosamine 6-phosphate. Catalyzes the conversion of glucosamine-6-phosphate to glucosamine-1-phosphate. The polypeptide is Phosphoglucosamine mutase (Acetivibrio thermocellus (strain ATCC 27405 / DSM 1237 / JCM 9322 / NBRC 103400 / NCIMB 10682 / NRRL B-4536 / VPI 7372) (Clostridium thermocellum)).